The following is a 763-amino-acid chain: Phosphoglycerol transferase I (763 aa).

4 consecutive transmembrane segments (helical) span residues 1–21 (MSELLSFALFLASVLIYAWKA), 26–46 (WWFAATLTVLGLFVVLNITLF), 77–97 (ILPGIGIVLGLTAVFGALGWI), and 108–128 (FGYSLLALLLALGSVDASPAF).

It belongs to the OpgB family.

Its subcellular location is the cell inner membrane. The enzyme catalyses a phosphatidylglycerol + a membrane-derived-oligosaccharide D-glucose = a 1,2-diacyl-sn-glycerol + a membrane-derived-oligosaccharide 6-(glycerophospho)-D-glucose.. The protein operates within glycan metabolism; osmoregulated periplasmic glucan (OPG) biosynthesis. In terms of biological role, transfers a phosphoglycerol residue from phosphatidylglycerol to the membrane-bound nascent glucan backbones. The polypeptide is Phosphoglycerol transferase I (Shigella boydii serotype 18 (strain CDC 3083-94 / BS512)).